A 336-amino-acid chain; its full sequence is Biotin synthase (336 aa).

The Radical SAM core domain maps to 51-270 (NQVQCNQLLN…IALARIMMPK (220 aa)). Positions 66, 70, and 73 each coordinate [4Fe-4S] cluster. [2Fe-2S] cluster contacts are provided by cysteine 110, cysteine 141, cysteine 201, and arginine 274.

It belongs to the radical SAM superfamily. Biotin synthase family. As to quaternary structure, homodimer. It depends on [4Fe-4S] cluster as a cofactor. The cofactor is [2Fe-2S] cluster.

It catalyses the reaction (4R,5S)-dethiobiotin + (sulfur carrier)-SH + 2 reduced [2Fe-2S]-[ferredoxin] + 2 S-adenosyl-L-methionine = (sulfur carrier)-H + biotin + 2 5'-deoxyadenosine + 2 L-methionine + 2 oxidized [2Fe-2S]-[ferredoxin]. It participates in cofactor biosynthesis; biotin biosynthesis; biotin from 7,8-diaminononanoate: step 2/2. In terms of biological role, catalyzes the conversion of dethiobiotin (DTB) to biotin by the insertion of a sulfur atom into dethiobiotin via a radical-based mechanism. In Rhodopseudomonas palustris (strain ATCC BAA-98 / CGA009), this protein is Biotin synthase.